The primary structure comprises 477 residues: Tripartite motif-containing protein 72 (477 aa).

Leu14, Gln17, Pro29, Cys31, Thr34, Gln37, Thr53, Pro56, Gly86, Leu89, Val97, Glu100, Leu105, Gly108, Gly114, and Lys117 together coordinate Zn(2+). The segment at 16–59 adopts an RING-type zinc-finger fold; it reads CQLCLELFRAPVTPECGHTFCQGCLTGVPKNQDQNGSTPCPTCQ. The B box-type zinc-finger motif lies at 83–124; it reads VPQGHCLEHMDPLSVYCEQDKELICGVCASLGKHKGHNIITA. Residues 135–232 adopt a coiled-coil conformation; sequence LPQQQVILQE…QMEGVLKDVE (98 aa). A B30.2/SPRY domain is found at 272–476; that stretch reads DEFKFQVWRK…LKIFYPPAEQ (205 aa).

The protein belongs to the TRIM/RBCC family. Homodimer. Homooligomer; disulfide-linked. Oligomerizes on the phospholipid membrane. In terms of processing, disulfide bond formation at Cys-244 occurs in case of membrane damage that cause the entry of the oxidized milieu of the extracellular space, resulting in homooligomerization.

The protein localises to the cell membrane. The protein resides in the sarcolemma. It localises to the cytoplasmic vesicle membrane. The enzyme catalyses S-ubiquitinyl-[E2 ubiquitin-conjugating enzyme]-L-cysteine + [acceptor protein]-L-lysine = [E2 ubiquitin-conjugating enzyme]-L-cysteine + N(6)-ubiquitinyl-[acceptor protein]-L-lysine.. It participates in protein modification; protein ubiquitination. Specifically binds phosphatidylserine. The binding to phospholipids enhances ubiquitination activity. In terms of biological role, muscle-specific E3 ubiquitin-protein ligase that plays a central role in cell membrane repair by nucleating the assembly of the repair machinery at injury sites. Acts as a sensor of oxidation: upon membrane damage, entry of extracellular oxidative environment results in disulfide bond formation and homooligomerization at the injury site. This oligomerization acts as a nucleation site for recruitment of TRIM72-containing vesicles to the injury site, leading to membrane patch formation. Probably acts upstream of the Ca(2+)-dependent membrane resealing process. Required for transport of DYSF to sites of cell injury during repair patch formation. Regulates membrane budding and exocytosis. May be involved in the regulation of the mobility of KCNB1-containing endocytic vesicles. This Xenopus laevis (African clawed frog) protein is Tripartite motif-containing protein 72 (trim72).